The chain runs to 138 residues: MSGIAVSDDCVQKFNELKLGHQHRYVTFKMNASNTEVVVEHVGGPNATYEDFKSQLPERDCRYAIFDYEFQVDGGQRNKITFILWAPDSAPIKSKMMYTSTKDSIKKKLVGIQVEVQATDAAEISEDAVSERAKKDVK.

Position 2 is a blocked amino end (Ser) (serine 2). In terms of domain architecture, ADF-H spans 3 to 134 (GIAVSDDCVQ…SEDAVSERAK (132 aa)).

This sequence belongs to the actin-binding proteins ADF family. In terms of assembly, monomer.

The protein resides in the cytoplasm. Its function is as follows. Forms a one to one complex with monomeric actin. Can regulate the pool available for polymerization. Severs actin filaments in a dose-dependent manner. In Acanthamoeba castellanii (Amoeba), this protein is Actophorin.